We begin with the raw amino-acid sequence, 267 residues long: Putative B3 domain-containing protein LOC_Os07g12820 (267 aa).

Residues 4–99 (PTFSMVKIKT…RLNVIIFNKE (96 aa)) constitute a DNA-binding region (TF-B3).

It localises to the nucleus. This is Putative B3 domain-containing protein LOC_Os07g12820 from Oryza sativa subsp. japonica (Rice).